The chain runs to 293 residues: tRNA-cytidine(32) 2-sulfurtransferase (293 aa).

Residues 62–67 carry the PP-loop motif motif; sequence SGGKDS. [4Fe-4S] cluster contacts are provided by Cys137, Cys140, and Cys228.

It belongs to the TtcA family. In terms of assembly, homodimer. Mg(2+) serves as cofactor. It depends on [4Fe-4S] cluster as a cofactor.

Its subcellular location is the cytoplasm. The catalysed reaction is cytidine(32) in tRNA + S-sulfanyl-L-cysteinyl-[cysteine desulfurase] + AH2 + ATP = 2-thiocytidine(32) in tRNA + L-cysteinyl-[cysteine desulfurase] + A + AMP + diphosphate + H(+). It functions in the pathway tRNA modification. Its function is as follows. Catalyzes the ATP-dependent 2-thiolation of cytidine in position 32 of tRNA, to form 2-thiocytidine (s(2)C32). The sulfur atoms are provided by the cysteine/cysteine desulfurase (IscS) system. This chain is tRNA-cytidine(32) 2-sulfurtransferase, found in Brucella suis (strain ATCC 23445 / NCTC 10510).